The chain runs to 74 residues: uncharacterized protein (74 aa).

Transmembrane regions (helical) follow at residues 3–23 and 35–55; these read YSALIPLFILLISLVLFCFSF and ILFFAYCIDFLALILAVMLLT.

It localises to the cell membrane. This is an uncharacterized protein from Mycoplasma genitalium (strain ATCC 33530 / DSM 19775 / NCTC 10195 / G37) (Mycoplasmoides genitalium).